The chain runs to 141 residues: MSNKKIIKIIKLQIPGGKANPAPPIGPALGAAGVNIMGFCKEFNAATQDRPGDLLPVVITVYSDKTFSFVMKQSPVSSLIKKALGLESGSKIPNRNKVGKLTRAQITVIAEQKMKDMDVVLLESAERMVEGTARSMGVDVE.

The protein belongs to the universal ribosomal protein uL11 family. As to quaternary structure, part of the ribosomal stalk of the 50S ribosomal subunit. Interacts with L10 and the large rRNA to form the base of the stalk. L10 forms an elongated spine to which L12 dimers bind in a sequential fashion forming a multimeric L10(L12)X complex. Post-translationally, one or more lysine residues are methylated.

Forms part of the ribosomal stalk which helps the ribosome interact with GTP-bound translation factors. The chain is Large ribosomal subunit protein uL11 from Chlamydia trachomatis serovar A (strain ATCC VR-571B / DSM 19440 / HAR-13).